The chain runs to 139 residues: Transcription antitermination protein NusB (139 aa).

The protein belongs to the NusB family.

In terms of biological role, involved in transcription antitermination. Required for transcription of ribosomal RNA (rRNA) genes. Binds specifically to the boxA antiterminator sequence of the ribosomal RNA (rrn) operons. In Escherichia coli (strain K12 / MC4100 / BW2952), this protein is Transcription antitermination protein NusB.